The sequence spans 420 residues: Hemojuvelin (420 aa).

The first 32 residues, 1–32 (MGQSPSPRSPHGSPPTLSTLTLLLLLCGQAHS), serve as a signal peptide directing secretion. A Phosphotyrosine modification is found at Tyr43. Residue Asn111 is glycosylated (N-linked (GlcNAc...) asparagine). A disordered region spans residues 113 to 135 (SRQGPTAPPPARGPALPGAGPAP). Residues 125-134 (GPALPGAGPA) are compositionally biased toward low complexity. 2 disulfide bridges follow: Cys141–Cys223 and Cys160–Cys310. Asn206 and Asn365 each carry an N-linked (GlcNAc...) asparagine glycan. Asp393 carries GPI-anchor amidated aspartate lipidation. The propeptide at 394–420 (AGPPLSPAICLVPLLSALFVLWLCFSK) is removed in mature form.

The protein belongs to the repulsive guidance molecule (RGM) family. In terms of assembly, interacts with BMP2 and BMP4. Interacts with BMP6. Interacts with BMPR1B. Interacts with TMPRSS6. Post-translationally, autocatalytically cleaved at low pH; the two chains remain linked via two disulfide bonds. Also proteolytically processed by TMPRSS6, several fragments being released in the extracellular space; regulates HJV activity in BMP signaling and thefore iron homeostasis. In terms of tissue distribution, muscle cell lineage.

The protein resides in the cell membrane. In terms of biological role, acts as a bone morphogenetic protein (BMP) coreceptor. Through enhancement of BMP signaling regulates hepcidin (HAMP) expression and regulates iron homeostasis. The chain is Hemojuvelin from Mus musculus (Mouse).